The chain runs to 91 residues: Auxin-responsive protein SAUR20 (91 aa).

It belongs to the ARG7 family.

The protein localises to the cell membrane. Functions as a positive effector of cell expansion through modulation of auxin transport. The chain is Auxin-responsive protein SAUR20 from Arabidopsis thaliana (Mouse-ear cress).